A 379-amino-acid polypeptide reads, in one-letter code: MSATLALTEQLIARASVTPDDQHCQQIMTERLAALGFECETIASHGVTNLWAVKRGTAGRDGKLLAFAGHTDVVPTGPLEQWTSPPFIPAHRDGKLYGRGAADMKTSLAAFIVASEEFVAAHPDHRGAIAFLITSDEEGPATDGTVKVVELLDARGEQLDYCIVGEPTSSAELGDVVKNGRRGSMSGELIVKGVQGHIAYPHLAKNPIHLLAPALAELAAEQWDAGNEYFPPTTWQVSNLRAGTGATNVIPGHADLMFNFRFSTASTVEGLQARVHAILDKHGLDYTLKWSVSGLPFLTPRGELSNALEHAIRAETGVTTELSTTGGTSDGRFIARICPQVIEFGPPNGSIHKIDEHIELRFVDPLKNVYRRVLEQLIA.

His70 serves as a coordination point for Zn(2+). The active site involves Asp72. A Zn(2+)-binding site is contributed by Asp103. Glu137 serves as the catalytic Proton acceptor. Positions 138, 166, and 352 each coordinate Zn(2+).

Belongs to the peptidase M20A family. DapE subfamily. Homodimer. The cofactor is Zn(2+). Requires Co(2+) as cofactor.

It catalyses the reaction N-succinyl-(2S,6S)-2,6-diaminopimelate + H2O = (2S,6S)-2,6-diaminopimelate + succinate. It functions in the pathway amino-acid biosynthesis; L-lysine biosynthesis via DAP pathway; LL-2,6-diaminopimelate from (S)-tetrahydrodipicolinate (succinylase route): step 3/3. In terms of biological role, catalyzes the hydrolysis of N-succinyl-L,L-diaminopimelic acid (SDAP), forming succinate and LL-2,6-diaminopimelate (DAP), an intermediate involved in the bacterial biosynthesis of lysine and meso-diaminopimelic acid, an essential component of bacterial cell walls. The protein is Succinyl-diaminopimelate desuccinylase of Burkholderia vietnamiensis (strain G4 / LMG 22486) (Burkholderia cepacia (strain R1808)).